The chain runs to 31 residues: Aspartate racemase (31 aa).

The tract at residues 1-31 (PVAPEYLFKKEEDKGANKEEEEVAPELGIRA) is disordered. A compositionally biased stretch (basic and acidic residues) spans 7-18 (LFKKEEDKGANK).

The protein belongs to the aspartate/glutamate racemases family. It depends on pyridoxal 5'-phosphate as a cofactor.

It carries out the reaction L-aspartate = D-aspartate. Inhibited by hydroxylamine, aminooxyacetate, phenylhydrazine and sodium borohydride. Highly specific toward aspartate and entirely inactive on glutamate, alanine and serine. In Anadara broughtonii (Blood clam), this protein is Aspartate racemase.